The sequence spans 211 residues: Protein-methionine-sulfoxide reductase heme-binding subunit MsrQ (211 aa).

The next 4 helical transmembrane spans lie at 10–30 (WLKV…VWAI), 82–102 (LWCF…ELGV), 116–136 (PYLT…FTST), and 153–173 (FVYL…KIIS).

This sequence belongs to the MsrQ family. Heterodimer of a catalytic subunit (MsrP) and a heme-binding subunit (MsrQ). The cofactor is FMN. Requires heme b as cofactor.

Its subcellular location is the cell inner membrane. Functionally, part of the MsrPQ system that repairs oxidized periplasmic proteins containing methionine sulfoxide residues (Met-O), using respiratory chain electrons. Thus protects these proteins from oxidative-stress damage caused by reactive species of oxygen and chlorine generated by the host defense mechanisms. MsrPQ is essential for the maintenance of envelope integrity under bleach stress, rescuing a wide series of structurally unrelated periplasmic proteins from methionine oxidation, including the primary periplasmic chaperone SurA and the lipoprotein Pal. MsrQ provides electrons for reduction to the reductase catalytic subunit MsrP, using the quinone pool of the respiratory chain. The sequence is that of Protein-methionine-sulfoxide reductase heme-binding subunit MsrQ from Escherichia coli O157:H7.